A 315-amino-acid polypeptide reads, in one-letter code: Olfactory receptor 11A1 (315 aa).

Over 1 to 27 the chain is Extracellular; it reads MEIVSTGNETITEFVLLGFYDIPELHF. Residue Asn-8 is glycosylated (N-linked (GlcNAc...) asparagine). The helical transmembrane segment at 28–48 threads the bilayer; sequence LFFIVFTAVYVFIIIGNMLII. Residues 49-56 lie on the Cytoplasmic side of the membrane; sequence VAVVSSQR. The helical transmembrane segment at 57–77 threads the bilayer; the sequence is LHKPMYIFLANLSFLDILYTS. Residues 78–100 lie on the Extracellular side of the membrane; that stretch reads AVMPKMLEGFLQEATISVAGCLL. Residues Cys-98 and Cys-190 are joined by a disulfide bond. Residues 101–121 traverse the membrane as a helical segment; sequence QFFIFGSLATAECLLLAVMAY. Residues 122 to 140 are Cytoplasmic-facing; it reads DRYLAICYPLHYPLLMGPR. Residues 141–161 form a helical membrane-spanning segment; sequence RYMGLVVTTWLSGFVVDGLVV. Residues 162–198 are Extracellular-facing; sequence ALVAQLRFCGPNHIDQFYCDFMLFVGLACSDPRVAQV. A helical transmembrane segment spans residues 199–218; that stretch reads TTLILSVFCLTIPFGLILTS. Residues 219-238 lie on the Cytoplasmic side of the membrane; the sequence is YARIVVAVLRVPAGASRRRA. The helical transmembrane segment at 239–259 threads the bilayer; it reads FSTCSSHLAVVTTFYGTLMIF. The Extracellular portion of the chain corresponds to 260 to 272; that stretch reads YVAPSAVHSQLLS. The chain crosses the membrane as a helical span at residues 273 to 293; sequence KVFSLLYTVVTPLFNPVIYTM. At 294 to 315 the chain is on the cytoplasmic side; the sequence is RNKEVHQALRKILCIKQTETLD.

This sequence belongs to the G-protein coupled receptor 1 family.

The protein localises to the cell membrane. Functionally, odorant receptor. The polypeptide is Olfactory receptor 11A1 (OR11A1) (Homo sapiens (Human)).